Reading from the N-terminus, the 121-residue chain is Protein opa (121 aa).

Belongs to the opacity porin family.

This Haemophilus influenzae (strain ATCC 51907 / DSM 11121 / KW20 / Rd) protein is Protein opa (opa).